We begin with the raw amino-acid sequence, 384 residues long: Opsin-3 (384 aa).

The Extracellular portion of the chain corresponds to Met1–Ala62. A glycan (N-linked (GlcNAc...) asparagine) is linked at Asn4. Residues Leu63–Phe83 traverse the membrane as a helical segment. Over Ser84 to Asn94 the chain is Cytoplasmic. The chain crosses the membrane as a helical span at residues Met95–Ile115. Topologically, residues Met116–Val132 are extracellular. Cys130 and Cys207 form a disulfide bridge. A helical membrane pass occupies residues Tyr133–Phe153. Over Asp154–Gln171 the chain is Cytoplasmic. Residues Ala172–Phe192 traverse the membrane as a helical segment. At Arg193–Glu219 the chain is on the extracellular side. The chain crosses the membrane as a helical span at residues Val220–Phe240. Residues Tyr241–Lys284 are Cytoplasmic-facing. Residues Val285–Met305 form a helical membrane-spanning segment. The Extracellular portion of the chain corresponds to Thr306–Arg312. A helical membrane pass occupies residues Thr313–Ile333. The Cytoplasmic segment spans residues Asp334–Ala384.

Belongs to the G-protein coupled receptor 1 family. Opsin subfamily. In terms of tissue distribution, in the retina, expression is essentially uniformly distributed but a higher level is seen in the ventral region where the B-cells are localized.

It is found in the membrane. Visual pigments are the light-absorbing molecules that mediate vision. They consist of an apoprotein, opsin, covalently linked to cis-retinal. May play a role in photoperiodic photoreception. The protein is Opsin-3 (OP3) of Manduca sexta (Tobacco hawkmoth).